The sequence spans 183 residues: Large ribosomal subunit protein uL6 (183 aa).

The protein belongs to the universal ribosomal protein uL6 family. Part of the 50S ribosomal subunit.

This protein binds to the 23S rRNA, and is important in its secondary structure. It is located near the subunit interface in the base of the L7/L12 stalk, and near the tRNA binding site of the peptidyltransferase center. This Mycoplasmoides gallisepticum (strain R(low / passage 15 / clone 2)) (Mycoplasma gallisepticum) protein is Large ribosomal subunit protein uL6.